Here is a 1377-residue protein sequence, read N- to C-terminus: Protein RhsA (1377 aa).

28 repeat units span residues 330–352 (GKQVRSFTYDDKYRGRMVAHRHT), 353–374 (GRPEIRYRYDSDGRVTEQLNPA), 375–417 (GLSY…EHAD), 418–438 (GSVTQSQFDAVGRLRAQTDAA), 439–460 (GRTTEYSPDVVTGLITRITTPD), 461–481 (GRASAFYYNHHNQLTSATGPD), 482–502 (GLELRREYDELGRLIQETAPD), 503–525 (GDITRYRYDNPHSDLPCATEDAT), 526–546 (GSRKTMTWSRYGQLLSFTDCS), 547–567 (GYVTRYDHDRFGQMTAVHREE), 568–588 (GLSQYRAYDSRGQLIAVKDTQ), 589–609 (GHETRYEYNIAGDLTAVIAPD), 610–629 (GSRNGTQYDAWGKAVRTTQG), 630–650 (GLTRSMEYDAAGRVIRLTSEN), 651–671 (GSHTTFRYDVLDRLIQETGFD), 672–691 (GRTQRYHHDLTGKLIRSEDE), 692–711 (GLVTHWHYDEADRLTHRTVK), 712–734 (GETAERWQYDERGWLTDISHISE), 735–758 (GHRVAVHYRYDEKGRLTGERQTVH), 808–828 (GDTPLVEYTRDRLHRETLRSF), 829–850 (GRYELTTAYTPAGQLQSQHLNS), 851–871 (LLSDRDYTWNDNGELIRISSP), 872–894 (RQTRSYSYSTTGRLTGVHTTAAN), 895–930 (LDIRIPYATDPAGNRLPDPELHPDSTLSMWPDNRIA), 931–959 (RDAHYLYRYDRHGRLTEKTDLIPEGVIRT), 960–984 (DDERTHRYHYDSQHRLVHYTRTQYE), 985–1019 (EPLVESRYLYDPLGRRVAKRVWRRERDLTGWMSLS), and 1162–1186 (GTTEWCAEYDEWGNLLNEENPHQLQ). Residues 330 to 1186 (GKQVRSFTYD…LNEENPHQLQ (857 aa)) are 28 X approximate tandem repeats. Residues 1356–1377 (DAKSTQKAWNCRHSRQSNDKKR) form a disordered region.

The protein belongs to the RHS family.

Its function is as follows. Rhs elements have a nonessential function. They may play an important role in the natural ecology of the cell. The protein is Protein RhsA (rhsA) of Escherichia coli (strain K12).